Reading from the N-terminus, the 334-residue chain is MTAVLAGHASALLLTEEPDCSGPQTVVLFRREPLLLDCGRALSDVRVAFHTYGTPRADATLVLHALTGDSAVHEWWPDFLGAGRPLDPADDYVVCANVLGGCAGTTSAAELAATCSGPVPLSLRDMARVGRALLDSLGVRRVRVIGASMGGMLAYAWLLECPDLVEKAVIIGAPARHSPWAIGLNTAARSAIALAPGGEGLKVARQIAMLSYRSPESLSRTQAGQRVPGVPAVTSYLHYQGEKLAARFDEQTYCALTWAMDAFQPSSADLKAVRAPVLVVGISSDLLYPAAEVRACAAELPHADYWELGSIHGHDAFLMDPQDLPERVGAFLRS.

Positions 61–318 (LVLHALTGDS…GSIHGHDAFL (258 aa)) constitute an AB hydrolase-1 domain. The Nucleophile role is filled by serine 148. Position 205 (arginine 205) interacts with substrate. Residues aspartate 285 and histidine 314 contribute to the active site. Aspartate 315 lines the substrate pocket.

It belongs to the AB hydrolase superfamily. MetX family. Homodimer.

It is found in the cytoplasm. It carries out the reaction L-homoserine + acetyl-CoA = O-acetyl-L-homoserine + CoA. It functions in the pathway amino-acid biosynthesis; L-methionine biosynthesis via de novo pathway; O-acetyl-L-homoserine from L-homoserine: step 1/1. Its function is as follows. Transfers an acetyl group from acetyl-CoA to L-homoserine, forming acetyl-L-homoserine. This is Homoserine O-acetyltransferase from Deinococcus radiodurans (strain ATCC 13939 / DSM 20539 / JCM 16871 / CCUG 27074 / LMG 4051 / NBRC 15346 / NCIMB 9279 / VKM B-1422 / R1).